The sequence spans 314 residues: Aspartate carbamoyltransferase catalytic subunit (314 aa).

Residues Arg55 and Thr56 each contribute to the carbamoyl phosphate site. L-aspartate is bound at residue Lys83. 3 residues coordinate carbamoyl phosphate: Arg105, His139, and Gln142. L-aspartate-binding residues include Arg172 and Arg226. Residues Gly267 and Pro268 each contribute to the carbamoyl phosphate site.

It belongs to the aspartate/ornithine carbamoyltransferase superfamily. ATCase family. In terms of assembly, heterododecamer (2C3:3R2) of six catalytic PyrB chains organized as two trimers (C3), and six regulatory PyrI chains organized as three dimers (R2).

The catalysed reaction is carbamoyl phosphate + L-aspartate = N-carbamoyl-L-aspartate + phosphate + H(+). It participates in pyrimidine metabolism; UMP biosynthesis via de novo pathway; (S)-dihydroorotate from bicarbonate: step 2/3. Functionally, catalyzes the condensation of carbamoyl phosphate and aspartate to form carbamoyl aspartate and inorganic phosphate, the committed step in the de novo pyrimidine nucleotide biosynthesis pathway. The polypeptide is Aspartate carbamoyltransferase catalytic subunit (Rhodococcus erythropolis (strain PR4 / NBRC 100887)).